Reading from the N-terminus, the 579-residue chain is Aspartate--tRNA(Asp/Asn) ligase (579 aa).

L-aspartate is bound at residue Glu169. The tract at residues Gln193 to Lys196 is aspartate. L-aspartate is bound at residue Arg215. ATP is bound by residues Arg215–Glu217 and Gln224. Residue His437 coordinates L-aspartate. Glu471 is an ATP binding site. Arg478 is a binding site for L-aspartate. Gly523–Arg526 contacts ATP. The disordered stretch occupies residues Asp551–Ser579.

Belongs to the class-II aminoacyl-tRNA synthetase family. Type 1 subfamily. As to quaternary structure, homodimer.

It is found in the cytoplasm. It carries out the reaction tRNA(Asx) + L-aspartate + ATP = L-aspartyl-tRNA(Asx) + AMP + diphosphate. In terms of biological role, aspartyl-tRNA synthetase with relaxed tRNA specificity since it is able to aspartylate not only its cognate tRNA(Asp) but also tRNA(Asn). Reaction proceeds in two steps: L-aspartate is first activated by ATP to form Asp-AMP and then transferred to the acceptor end of tRNA(Asp/Asn). The protein is Aspartate--tRNA(Asp/Asn) ligase of Thermobifida fusca (strain YX).